A 455-amino-acid chain; its full sequence is Bifunctional protein GlmU (455 aa).

Residues 1 to 227 (MDSLSIVILA…SWEAAGVNNK (227 aa)) form a pyrophosphorylase region. UDP-N-acetyl-alpha-D-glucosamine-binding positions include 9-12 (LAAG), lysine 23, glutamine 74, 79-80 (GT), 101-103 (YGD), glycine 137, glutamate 152, asparagine 167, and asparagine 225. Aspartate 103 serves as a coordination point for Mg(2+). Residue asparagine 225 coordinates Mg(2+). Positions 228–248 (VQLAELERILQANQARALLEA) are linker. The segment at 249–455 (GVTLADPARI…GWKRPQKKSG (207 aa)) is N-acetyltransferase. Arginine 331 and lysine 349 together coordinate UDP-N-acetyl-alpha-D-glucosamine. Histidine 361 serves as the catalytic Proton acceptor. UDP-N-acetyl-alpha-D-glucosamine contacts are provided by tyrosine 364 and asparagine 375. Acetyl-CoA is bound by residues alanine 378, 384–385 (NY), serine 403, alanine 421, and arginine 438.

It in the N-terminal section; belongs to the N-acetylglucosamine-1-phosphate uridyltransferase family. In the C-terminal section; belongs to the transferase hexapeptide repeat family. Homotrimer. Mg(2+) is required as a cofactor.

The protein resides in the cytoplasm. It catalyses the reaction alpha-D-glucosamine 1-phosphate + acetyl-CoA = N-acetyl-alpha-D-glucosamine 1-phosphate + CoA + H(+). It carries out the reaction N-acetyl-alpha-D-glucosamine 1-phosphate + UTP + H(+) = UDP-N-acetyl-alpha-D-glucosamine + diphosphate. Its pathway is nucleotide-sugar biosynthesis; UDP-N-acetyl-alpha-D-glucosamine biosynthesis; N-acetyl-alpha-D-glucosamine 1-phosphate from alpha-D-glucosamine 6-phosphate (route II): step 2/2. It participates in nucleotide-sugar biosynthesis; UDP-N-acetyl-alpha-D-glucosamine biosynthesis; UDP-N-acetyl-alpha-D-glucosamine from N-acetyl-alpha-D-glucosamine 1-phosphate: step 1/1. It functions in the pathway bacterial outer membrane biogenesis; LPS lipid A biosynthesis. In terms of biological role, catalyzes the last two sequential reactions in the de novo biosynthetic pathway for UDP-N-acetylglucosamine (UDP-GlcNAc). The C-terminal domain catalyzes the transfer of acetyl group from acetyl coenzyme A to glucosamine-1-phosphate (GlcN-1-P) to produce N-acetylglucosamine-1-phosphate (GlcNAc-1-P), which is converted into UDP-GlcNAc by the transfer of uridine 5-monophosphate (from uridine 5-triphosphate), a reaction catalyzed by the N-terminal domain. The chain is Bifunctional protein GlmU from Chromobacterium violaceum (strain ATCC 12472 / DSM 30191 / JCM 1249 / CCUG 213 / NBRC 12614 / NCIMB 9131 / NCTC 9757 / MK).